Consider the following 422-residue polypeptide: MLRQILSEMFIDPDLLAELSEEQKQILFYKMREEQIRRWKEREAAMERKESLPVKSRPKKENGKSVHWKLGADKQVWVWVMGEHHLDKPYDVLCDEILAEREHLRAAKDAELRKAQSLQFTNSLKVKSLNCDLQAVKKTEPQNVTRKAAAEEATDQGPRAIPTKKDDKAQTKDLTKKKDSEELKQTEDEKTKQIYKNWKEDSEWQASLRKSKAADEKRRSLAKQAREDYKRLSQRGRSGDGLQNPLTGPQKPKRPPLPPKPQFLQPLGSPPKSLGNQGVIRTKTSSTQEDIIRWFKEEQLPFRAGYQKNSDTIAPWFHGILTLKKANELLSTGMPGSFLIRVSEKIKGYALSYLSEEGCKHFLIDASANSYSFLGVDQLQHATLADLVEYHKEEPITSLGKELLLFPCGQQDKPPDYLELFQ.

Ser-117 and Ser-123 each carry phosphoserine. Disordered regions lie at residues 141 to 190 (PQNV…EDEK) and 202 to 282 (SEWQ…VIRT). 2 stretches are compositionally biased toward basic and acidic residues: residues 163-190 (TKKD…EDEK) and 212-231 (KAAD…DYKR). Residue Ser-233 is modified to Phosphoserine. One can recognise an SH2 domain in the interval 316–408 (WFHGILTLKK…LGKELLLFPC (93 aa)).

Interacts with ESR1.

The protein localises to the cytoplasm. Its function is as follows. Inhibits estrogen-induced cell proliferation by competing with PLCG for binding to ESR1, blocking the effect of estrogen on PLCG and repressing estrogen-induced proliferation. May play a role in T-cell development and function. The chain is SH2 domain-containing protein 4A (Sh2d4a) from Rattus norvegicus (Rat).